Here is a 243-residue protein sequence, read N- to C-terminus: Variant surface antigen E (243 aa).

Residues 1 to 29 form the signal peptide; it reads MKKSIFSKKLLVSFGSLVTLAAIPLIAIS. C30 is lipidated: N-palmitoyl cysteine. A lipid anchor (S-diacylglycerol cysteine) is attached at C30. Positions 34–243 are disordered; it reads TDNLSQSQQP…TTSDGQNQNK (210 aa). Positions 52–92 are enriched in low complexity; sequence GTNTENGSNNGSGSGTTNSSGGTNQSGSASGNGSSNSSVST. Polar residues predominate over residues 93-243; sequence PDGQHSNPSN…TTSDGQNQNK (151 aa). 11 repeat units span residues 97 to 109, 110 to 122, 123 to 135, 136 to 148, 149 to 161, 162 to 174, 175 to 187, 188 to 200, 201 to 213, 214 to 226, and 227 to 239. The segment at 97–239 is 11 X 13 AA tandem repeats; it reads HSNPSNPTTS…PSNPTTSDGQ (143 aa).

The protein resides in the cell membrane. Its function is as follows. Responsible for the antigenic diversity for host adaptation. Expression in E.coli of a construct containing vlpD, vlpE, and vlpF yields antigenically distinguishable products corresponding to each gene. In Mesomycoplasma hyorhinis (Mycoplasma hyorhinis), this protein is Variant surface antigen E (vlpE).